The following is a 300-amino-acid chain: PAK4-inhibitor INKA2 (300 aa).

Disordered stretches follow at residues 59–104 (GGTP…SSPK), 178–201 (LEKG…GQSR), and 230–288 (KEKP…LEPS). The span at 60 to 73 (GTPTFSCPESSQEQ) shows a compositional bias: polar residues. Over residues 93–102 (SSSQPSFDSS) the composition is skewed to low complexity. The inka box stretch occupies residues 140 to 183 (EPDDWTSTLMSRGRNRQPLVLGDNVFADLVGNWLDLPELEKGGE). Basic residues predominate over residues 246–256 (GRSKKVKKRSL).

This sequence belongs to the INKA family. As to quaternary structure, interacts with PAK4. As to expression, enriched in the nervous system.

Its subcellular location is the nucleus. Functionally, inhibitor of the serine/threonine-protein kinase PAK4. Acts by binding PAK4 in a substrate-like manner, inhibiting the protein kinase activity. The sequence is that of PAK4-inhibitor INKA2 from Mus musculus (Mouse).